A 441-amino-acid chain; its full sequence is Tubulin beta-1 chain (441 aa).

Positions 11, 69, 138, 142, 143, 144, 204, and 226 each coordinate GTP. A Mg(2+)-binding site is contributed by Glu69.

Belongs to the tubulin family. Dimer of alpha and beta chains. A typical microtubule is a hollow water-filled tube with an outer diameter of 25 nm and an inner diameter of 15 nM. Alpha-beta heterodimers associate head-to-tail to form protofilaments running lengthwise along the microtubule wall with the beta-tubulin subunit facing the microtubule plus end conferring a structural polarity. Microtubules usually have 13 protofilaments but different protofilament numbers can be found in some organisms and specialized cells. The cofactor is Mg(2+). In terms of tissue distribution, expressed primarily in touch receptor neurons.

The protein localises to the cytoplasm. The protein resides in the cytoskeleton. In terms of biological role, tubulin is the major constituent of microtubules, a cylinder consisting of laterally associated linear protofilaments composed of alpha- and beta-tubulin heterodimers. Microtubules grow by the addition of GTP-tubulin dimers to the microtubule end, where a stabilizing cap forms. Below the cap, tubulin dimers are in GDP-bound state, owing to GTPase activity of alpha-tubulin. Plays a role in mechanosensory transduction (touch sensitivity). Mec-7 beta-tubulin is required for the production of 15-protofilament microtubules. This Caenorhabditis briggsae protein is Tubulin beta-1 chain (mec-7).